We begin with the raw amino-acid sequence, 354 residues long: 3-dehydroquinate synthase (354 aa).

NAD(+) contacts are provided by residues 100–104 (GATGD), 124–125 (TT), Lys136, Lys145, and 163–166 (FLKT). The Zn(2+) site is built by Glu178, His242, and His256.

Belongs to the sugar phosphate cyclases superfamily. Dehydroquinate synthase family. The cofactor is NAD(+). Co(2+) serves as cofactor. Zn(2+) is required as a cofactor.

The protein localises to the cytoplasm. It carries out the reaction 7-phospho-2-dehydro-3-deoxy-D-arabino-heptonate = 3-dehydroquinate + phosphate. It functions in the pathway metabolic intermediate biosynthesis; chorismate biosynthesis; chorismate from D-erythrose 4-phosphate and phosphoenolpyruvate: step 2/7. Its function is as follows. Catalyzes the conversion of 3-deoxy-D-arabino-heptulosonate 7-phosphate (DAHP) to dehydroquinate (DHQ). The polypeptide is 3-dehydroquinate synthase (Staphylococcus aureus (strain Mu50 / ATCC 700699)).